Here is a 62-residue protein sequence, read N- to C-terminus: DNA-directed RNA polymerase subunit Rpo10 (62 aa).

Zn(2+)-binding residues include Cys6, Cys9, Cys43, and Cys44.

It belongs to the archaeal Rpo10/eukaryotic RPB10 RNA polymerase subunit family. In terms of assembly, part of the RNA polymerase complex. The cofactor is Zn(2+).

It is found in the cytoplasm. The catalysed reaction is RNA(n) + a ribonucleoside 5'-triphosphate = RNA(n+1) + diphosphate. Its function is as follows. DNA-dependent RNA polymerase (RNAP) catalyzes the transcription of DNA into RNA using the four ribonucleoside triphosphates as substrates. This is DNA-directed RNA polymerase subunit Rpo10 from Methanoculleus marisnigri (strain ATCC 35101 / DSM 1498 / JR1).